A 476-amino-acid polypeptide reads, in one-letter code: Aspartyl/glutamyl-tRNA(Asn/Gln) amidotransferase subunit B (476 aa).

The protein belongs to the GatB/GatE family. GatB subfamily. Heterotrimer of A, B and C subunits.

It carries out the reaction L-glutamyl-tRNA(Gln) + L-glutamine + ATP + H2O = L-glutaminyl-tRNA(Gln) + L-glutamate + ADP + phosphate + H(+). The catalysed reaction is L-aspartyl-tRNA(Asn) + L-glutamine + ATP + H2O = L-asparaginyl-tRNA(Asn) + L-glutamate + ADP + phosphate + 2 H(+). In terms of biological role, allows the formation of correctly charged Asn-tRNA(Asn) or Gln-tRNA(Gln) through the transamidation of misacylated Asp-tRNA(Asn) or Glu-tRNA(Gln) in organisms which lack either or both of asparaginyl-tRNA or glutaminyl-tRNA synthetases. The reaction takes place in the presence of glutamine and ATP through an activated phospho-Asp-tRNA(Asn) or phospho-Glu-tRNA(Gln). The polypeptide is Aspartyl/glutamyl-tRNA(Asn/Gln) amidotransferase subunit B (Neisseria meningitidis serogroup C (strain 053442)).